The following is a 269-amino-acid chain: 5'-nucleotidase SurE (269 aa).

Positions 11, 12, 43, and 101 each coordinate a divalent metal cation.

This sequence belongs to the SurE nucleotidase family. The cofactor is a divalent metal cation.

It is found in the cytoplasm. It catalyses the reaction a ribonucleoside 5'-phosphate + H2O = a ribonucleoside + phosphate. Nucleotidase that shows phosphatase activity on nucleoside 5'-monophosphates. The chain is 5'-nucleotidase SurE from Synechococcus sp. (strain CC9902).